Reading from the N-terminus, the 121-residue chain is Large ribosomal subunit protein bL19 (121 aa).

This sequence belongs to the bacterial ribosomal protein bL19 family.

Its function is as follows. This protein is located at the 30S-50S ribosomal subunit interface and may play a role in the structure and function of the aminoacyl-tRNA binding site. This chain is Large ribosomal subunit protein bL19 (rplS), found in Borreliella burgdorferi (strain ATCC 35210 / DSM 4680 / CIP 102532 / B31) (Borrelia burgdorferi).